The chain runs to 571 residues: Folylpolyglutamate synthase (571 aa).

G122–S125 is a binding site for ATP. Mg(2+)-binding residues include S146, E215, and H243. 2 residues coordinate ATP: R363 and D385.

This sequence belongs to the folylpolyglutamate synthase family. A monovalent cation is required as a cofactor. As to expression, expressed in both shoots and roots, but expression in roots is higher compared with shoots. Distinct expression in the quiescent center (QC) region of the root tip. Also expressed in vascular tissues of the cotyledons and hypocotyls, and the first true leaves of 7 days old seedlings.

The protein resides in the plastid. Its subcellular location is the chloroplast. It carries out the reaction (6S)-5,6,7,8-tetrahydrofolyl-(gamma-L-Glu)(n) + L-glutamate + ATP = (6S)-5,6,7,8-tetrahydrofolyl-(gamma-L-Glu)(n+1) + ADP + phosphate + H(+). It functions in the pathway cofactor biosynthesis; tetrahydrofolylpolyglutamate biosynthesis. Catalyzes conversion of folates to polyglutamate derivatives allowing concentration of folate compounds in the cell and the intracellular retention of these cofactors, which are important substrates for most of the folate-dependent enzymes that are involved in one-carbon transfer reactions involved in purine, pyrimidine and amino acid synthesis. Essential for organellar and whole-plant folate homeostasis. Required for postembryonic root development. Generates polyglutamylated folate cofactors to support C1 metabolism required for meristem maintenance and cell expansion during postembryonic root development. The protein is Folylpolyglutamate synthase of Arabidopsis thaliana (Mouse-ear cress).